Consider the following 795-residue polypeptide: Protein translocase subunit SecA 2 (795 aa).

ATP-binding positions include Q84, 102-106 (GEGKT), and D496.

It belongs to the SecA family. As to quaternary structure, monomer and homodimer. Part of the essential Sec protein translocation apparatus which comprises SecA, SecYEG and auxiliary proteins SecDF. Other proteins may also be involved.

The protein localises to the cell membrane. Its subcellular location is the cytoplasm. It catalyses the reaction ATP + H2O + cellular proteinSide 1 = ADP + phosphate + cellular proteinSide 2.. Part of the Sec protein translocase complex. Interacts with the SecYEG preprotein conducting channel. Has a central role in coupling the hydrolysis of ATP to the transfer of proteins into and across the cell membrane, serving as an ATP-driven molecular motor driving the stepwise translocation of polypeptide chains across the membrane. The protein is Protein translocase subunit SecA 2 of Streptococcus agalactiae serotype III (strain NEM316).